The following is a 401-amino-acid chain: Solute carrier family 22 member 17 (401 aa).

10 consecutive transmembrane segments (helical) span residues 10 to 30, 35 to 55, 69 to 89, 100 to 120, 184 to 203, 218 to 238, 247 to 267, 277 to 297, 309 to 329, and 336 to 356; these read GIVL…AAAG, IMAL…GVYL, VALA…GLAL, MITA…FLES, NIWK…HAIR, FYLC…FLGV, GILL…LGLW, TFSV…TLLA, GLGL…AQRL, and FLQH…IMLL.

The protein belongs to the major facilitator (TC 2.A.1) superfamily. Organic cation transporter (TC 2.A.1.19) family. As to expression, widely expressed.

It localises to the cell membrane. The protein resides in the vacuole membrane. In terms of biological role, cell surface receptor for LCN2 (24p3) that plays a key role in iron homeostasis and transport. Able to bind iron-bound LCN2 (holo-24p3), followed by internalization of holo-24p3 and release of iron, thereby increasing intracellular iron concentration and leading to inhibition of apoptosis. Also binds iron-free LCN2 (apo-24p3), followed by internalization of apo-24p3 and its association with an intracellular siderophore, leading to iron chelation and iron transfer to the extracellular medium, thereby reducing intracellular iron concentration and resulting in apoptosis. The chain is Solute carrier family 22 member 17 (Slc22a17) from Mus musculus (Mouse).